We begin with the raw amino-acid sequence, 1850 residues long: Chitin synthase V (1850 aa).

The disordered stretch occupies residues 1–27; it reads MASTLPPLGGGNGGPHTQHSLPSLPAH. In terms of domain architecture, Myosin motor spans 1–779; it reads MASTLPPLGG…EIAGLVDGSA (779 aa). 105–112 is a binding site for ATP; the sequence is GESGSGKS. Asn-245, Asn-290, Asn-427, Asn-481, and Asn-558 each carry an N-linked (GlcNAc...) asparagine glycan. A disordered region spans residues 289–309; it reads NNTSATGDDSGGFSHEGGQTS. Residues 593 to 647 form a disordered region; the sequence is SKPMRAPSVMSRKGGRGRGIASQRRQQESNLFDSGNTHAESRSPKGGNKGGIDQG. Polar residues predominate over residues 620 to 630; it reads ESNLFDSGNTH. The interval 656–680 is actin-binding; sequence LDNVQKAVTDPGTNAYFVFCLKPND. The next 2 helical transmembrane spans lie at 884–904 and 923–943; these read WVFTVYFLTWFIPDFLIRWIG and MLIWFMCLVAAFFIVVFPMLI. The 60-residue stretch at 947-1006 folds into the Cytochrome b5 heme-binding domain; sequence QNVFSAAELSSHNGKDGNSAYVSIRGHVIDLGSFADRHYPSFVSRKTMLNYAGMDVSSLF. N-linked (GlcNAc...) asparagine glycans are attached at residues Asn-1033, Asn-1058, and Asn-1186. A helical transmembrane segment spans residues 1196 to 1216; it reads LVLAVSILLVSVIAFKFFAAL. Asn-1453 and Asn-1559 each carry an N-linked (GlcNAc...) asparagine glycan. 4 helical membrane-spanning segments follow: residues 1568-1588, 1590-1610, 1617-1637, and 1644-1664; these read LIPMAQLCGFCCFSMRFVVFI, LLSTVVQPVTIAYIVYLIVLV, VPITAFILLGAIYGLQAIIFI, and MVGWMILYVMAVPVFSFGLPL. N-linked (GlcNAc...) asparagine glycosylation occurs at Asn-1767. The DEK-C domain maps to 1800–1850; sequence LPSDDALLAEIRDILKTADLMTVTKKGIKQELERRFDVPLDAKRAYINSGK.

This sequence in the N-terminal section; belongs to the TRAFAC class myosin-kinesin ATPase superfamily. Myosin family. It in the C-terminal section; belongs to the chitin synthase family. Class V subfamily. As to expression, expressed in conidia and during appressorium formation.

The protein localises to the cell membrane. The protein resides in the cell septum. Its subcellular location is the cell tip. It carries out the reaction [(1-&gt;4)-N-acetyl-beta-D-glucosaminyl](n) + UDP-N-acetyl-alpha-D-glucosamine = [(1-&gt;4)-N-acetyl-beta-D-glucosaminyl](n+1) + UDP + H(+). Polymerizes chitin, a structural polymer of the cell wall and septum, by transferring the sugar moiety of UDP-GlcNAc to the non-reducing end of the growing chitin polymer. Contributes to the production of conidia and the ability of fungal conidia to germinate. Involved in the fungal cell wall integrity and the ability of conidia to withstand biophysical pressure. Required for appressorium formation and evasion of insect cellular and/or humoral defenses, promoting the fungal dimorphic transition to the production of hyphal bodies that occurs within hosts, and ultimately to virulence. The sequence is that of Chitin synthase V from Metarhizium acridum (strain CQMa 102).